A 374-amino-acid polypeptide reads, in one-letter code: Amino acid binding protein (374 aa).

The N-terminal stretch at 1-27 (MSKKLFRKGILALAVSSVMGLSTHALA) is a signal peptide.

The protein belongs to the leucine-binding protein family.

It localises to the periplasm. Binds primarily proteinogenic amino acids. This Pseudomonas aeruginosa (strain ATCC 15692 / DSM 22644 / CIP 104116 / JCM 14847 / LMG 12228 / 1C / PRS 101 / PAO1) protein is Amino acid binding protein.